The following is a 259-amino-acid chain: tRNA (guanine-N(7)-)-methyltransferase (259 aa).

Residues Gly80, 103-104, 136-137, and Leu156 each bind S-adenosyl-L-methionine; these read EL and NS. Asp159 is an active-site residue. 234-236 is a binding site for S-adenosyl-L-methionine; the sequence is TEE.

The protein belongs to the class I-like SAM-binding methyltransferase superfamily. TrmB family.

It localises to the nucleus. It catalyses the reaction guanosine(46) in tRNA + S-adenosyl-L-methionine = N(7)-methylguanosine(46) in tRNA + S-adenosyl-L-homocysteine. It functions in the pathway tRNA modification; N(7)-methylguanine-tRNA biosynthesis. Its function is as follows. Catalyzes the formation of N(7)-methylguanine at position 46 (m7G46) in tRNA. This is tRNA (guanine-N(7)-)-methyltransferase from Oryza sativa subsp. indica (Rice).